The sequence spans 134 residues: Salivary protein 15 Iric-1 (134 aa).

An N-terminal signal peptide occupies residues 1–21 (MESFVAMKVVCITVLFVIVAV). Asn-22 carries an N-linked (GlcNAc...) asparagine glycan. Residues 48–67 (PSYIRNPQKLALELLEICKN) are required for Borrelia OspC-binding. 2 N-linked (GlcNAc...) asparagine glycosylation sites follow: Asn-91 and Asn-103. The tract at residues 115–134 (GPNGETCAEKSKCVGHIPGC) is CD4-binding.

The protein belongs to the salp15 family. Monomer. Interacts with host CD4. Interacts with host DC-SIGN (CD209). As to quaternary structure, (Microbial infection) Interacts with Borrelia outer surface protein C (OspC). In terms of tissue distribution, expressed in salivary glands. Detected in fed adult female.

Its subcellular location is the secreted. Functionally, salivary tick protein that downregulates host immune system by binding to both dendritic cells, and CD4(+) T cells. Specifically binds to the CD4 coreceptor on T cells. This interaction prevents the activation of the Src kinase, Lck, and its downstream substrate Zap-70, and results in deficient activation of PLCgamma1, the repression of calcium fluxes triggered by T-cell antigen receptor (TCR) ligation, and a subsequent reduction in interleukin-2 production. This salivary protein also binds to DC-SIGN (CD209) on dendritic cells (DC) and activates the Raf-1 kinase/MEK signaling pathway that results in down-regulating expression of pro-inflammatory cytokines. Furthermore, it inhibits T cell proliferation induced by DCs. In addition, it inhibits in vitro keratinocyte inflammation induced by Borrelia burgdorferi or by the major outer surface protein (OspC) of Borrelia. In addition, it downregulates chemokines and monocyte chemoattractant protein 1, as well as several antimicrobial peptides such as defensins, cathelicidin, psoriasin, and RNase 7. Apart from its immunomodulatory activities, it is also associated with protection of Borrelia spirochetes from antibody-mediated killing through its binding to OspC. In vivo, tests on different immune disease animal models show promising therapeutic results, e.g., in inhibiting HIV infection, experimental autoimmune encephalomyelitis, transplantation rejection, and asthma. In terms of biological role, (Microbial infection) Protects Borrelia garinii (strain VSBP) from host complement-mediated killing by binding to the surface of spirochetes and preventing deposition of host C5b-9 membrane attack complexes. Protects Borrelia garinii (strain A87S) from host complement-mediated killing. Its function is as follows. (Microbial infection) Partially protects Borrelia burgdorferi (strains VS215 and B31) from host complement-mediated killing. The polypeptide is Salivary protein 15 Iric-1 (Ixodes ricinus (Common tick)).